The following is a 508-amino-acid chain: Photosystem II CP47 reaction center protein (508 aa).

Transmembrane regions (helical) follow at residues 21–36 (SVHI…WAGS), 101–115 (IVFS…IWHW), 140–156 (GIHL…FGAF), 203–218 (IAAG…FHLS), 237–252 (VLSS…AFVV), and 457–472 (SFAL…HGAR).

It belongs to the PsbB/PsbC family. PsbB subfamily. PSII is composed of 1 copy each of membrane proteins PsbA, PsbB, PsbC, PsbD, PsbE, PsbF, PsbH, PsbI, PsbJ, PsbK, PsbL, PsbM, PsbT, PsbX, PsbY, PsbZ, Psb30/Ycf12, at least 3 peripheral proteins of the oxygen-evolving complex and a large number of cofactors. It forms dimeric complexes. Binds multiple chlorophylls. PSII binds additional chlorophylls, carotenoids and specific lipids. is required as a cofactor.

Its subcellular location is the plastid. The protein localises to the chloroplast thylakoid membrane. Its function is as follows. One of the components of the core complex of photosystem II (PSII). It binds chlorophyll and helps catalyze the primary light-induced photochemical processes of PSII. PSII is a light-driven water:plastoquinone oxidoreductase, using light energy to abstract electrons from H(2)O, generating O(2) and a proton gradient subsequently used for ATP formation. The polypeptide is Photosystem II CP47 reaction center protein (Ipomoea purpurea (Common morning glory)).